The sequence spans 625 residues: Pentatricopeptide repeat-containing protein At2g36980, mitochondrial (625 aa).

A mitochondrion-targeting transit peptide spans 1-7 (MSVLVRL). 15 PPR repeats span residues 3 to 33 (VLVR…MPEL), 34 to 68 (DTVA…DAKP), 69 to 103 (DDYS…GFCA), 104 to 134 (SLPV…MCCD), 137 to 167 (NEVT…MPKR), 168 to 202 (VAFA…EFKP), 203 to 238 (DCYT…GWSS), 239 to 269 (AVEA…IEVL), 270 to 300 (TQVS…APEK), 301 to 335 (NIVT…GVDS), 336 to 370 (DHFA…GFQG), 371 to 401 (YAYV…IANK), 402 to 436 (DLVS…GIKP), 437 to 471 (DNVT…YRIP), and 473 to 503 (EVDH…YSSL). The segment at 512-587 (SWETLLGACS…TPGCSWIEVG (76 aa)) is type E motif. Positions 588-618 (NQVSTFVVGDSSHPRLEELSETLNCLQHEMR) are type E(+) motif.

Belongs to the PPR family. PCMP-E subfamily.

Its subcellular location is the mitochondrion. The protein is Pentatricopeptide repeat-containing protein At2g36980, mitochondrial (PCMP-E73) of Arabidopsis thaliana (Mouse-ear cress).